We begin with the raw amino-acid sequence, 333 residues long: Ferrochelatase (333 aa).

Fe cation-binding residues include histidine 202 and glutamate 284.

This sequence belongs to the ferrochelatase family.

The protein resides in the cytoplasm. The enzyme catalyses heme b + 2 H(+) = protoporphyrin IX + Fe(2+). It functions in the pathway porphyrin-containing compound metabolism; protoheme biosynthesis; protoheme from protoporphyrin-IX: step 1/1. Its function is as follows. Catalyzes the ferrous insertion into protoporphyrin IX. The sequence is that of Ferrochelatase from Francisella tularensis subsp. novicida (strain U112).